A 310-amino-acid chain; its full sequence is Olfactory receptor 1496 (310 aa).

Over 1–23 the chain is Extracellular; sequence MNNQTFITQFLLLGLPIPEEHQH. Asn-3 is a glycosylation site (N-linked (GlcNAc...) asparagine). A helical transmembrane segment spans residues 24-48; the sequence is LFYALFLVMYLTTILGNLLIIVLVQ. The Cytoplasmic portion of the chain corresponds to 49–55; it reads LDSQLHT. Residues 56 to 77 form a helical membrane-spanning segment; it reads PMYLFLSNLSFSDLCFSSVTMP. At 78–98 the chain is on the extracellular side; that stretch reads KLLQNMRSQDTSIPYGGCLAQ. The cysteines at positions 95 and 187 are disulfide-linked. Residues 99 to 118 traverse the membrane as a helical segment; sequence TYFFMVFGDMESFLLVAMAY. The Cytoplasmic segment spans residues 119 to 137; it reads DRYVAICFPLHYTSIMSPK. The helical transmembrane segment at 138-156 threads the bilayer; that stretch reads LCTCLVLLLWMLTTSHAMM. The Extracellular portion of the chain corresponds to 157 to 194; it reads HTLLAARLSFCENNVVLNFFCDLFVLLKLACSDTYINE. Residues 195 to 217 traverse the membrane as a helical segment; it reads LMIFIMSTLLIIIPFFLIVMSYA. Topologically, residues 218–234 are cytoplasmic; sequence RIISSILKVPSTQGICK. A helical transmembrane segment spans residues 235–258; that stretch reads VFSTCGSHLSVVSLFYGTIIGLYL. At 259–270 the chain is on the extracellular side; sequence CPAGNNSTVKEM. A helical transmembrane segment spans residues 271–290; it reads VMAMMYTVVTPMLNPFIYSL. The Cytoplasmic segment spans residues 291–310; that stretch reads RNRDMKRALIRVICSMKITL.

The protein belongs to the G-protein coupled receptor 1 family. In terms of tissue distribution, olfactory epithelium.

It is found in the cell membrane. Its function is as follows. Odorant receptor. This is Olfactory receptor 1496 (Olr1496) from Rattus norvegicus (Rat).